Here is a 216-residue protein sequence, read N- to C-terminus: Dimethylamine corrinoid protein 1 (216 aa).

One can recognise a B12-binding N-terminal domain in the interval 1 to 91 (MTSKEELLQE…DMPAGTETKK (91 aa)). In terms of domain architecture, B12-binding spans 92 to 216 (LGVIVNGTVE…AKAKELLVGK (125 aa)). H105 serves as a coordination point for methylcob(III)alamin.

The protein belongs to the methylamine corrinoid protein family.

The protein operates within one-carbon metabolism; methanogenesis from dimethylamine. In terms of biological role, acts as a methyl group carrier between MtbB and MtbA. The protein is Dimethylamine corrinoid protein 1 (mtbC1) of Methanosarcina mazei (strain ATCC BAA-159 / DSM 3647 / Goe1 / Go1 / JCM 11833 / OCM 88) (Methanosarcina frisia).